A 375-amino-acid polypeptide reads, in one-letter code: Succinyl-diaminopimelate desuccinylase (375 aa).

His66 is a binding site for Zn(2+). Residue Asp68 is part of the active site. Residue Asp99 coordinates Zn(2+). Glu133 (proton acceptor) is an active-site residue. Positions 134, 162, and 348 each coordinate Zn(2+).

It belongs to the peptidase M20A family. DapE subfamily. In terms of assembly, homodimer. The cofactor is Zn(2+). It depends on Co(2+) as a cofactor.

It catalyses the reaction N-succinyl-(2S,6S)-2,6-diaminopimelate + H2O = (2S,6S)-2,6-diaminopimelate + succinate. It participates in amino-acid biosynthesis; L-lysine biosynthesis via DAP pathway; LL-2,6-diaminopimelate from (S)-tetrahydrodipicolinate (succinylase route): step 3/3. Catalyzes the hydrolysis of N-succinyl-L,L-diaminopimelic acid (SDAP), forming succinate and LL-2,6-diaminopimelate (DAP), an intermediate involved in the bacterial biosynthesis of lysine and meso-diaminopimelic acid, an essential component of bacterial cell walls. The sequence is that of Succinyl-diaminopimelate desuccinylase from Photorhabdus laumondii subsp. laumondii (strain DSM 15139 / CIP 105565 / TT01) (Photorhabdus luminescens subsp. laumondii).